The sequence spans 347 residues: Histidinol-phosphate aminotransferase (347 aa).

N6-(pyridoxal phosphate)lysine is present on Lys-209.

It belongs to the class-II pyridoxal-phosphate-dependent aminotransferase family. Histidinol-phosphate aminotransferase subfamily. As to quaternary structure, homodimer. The cofactor is pyridoxal 5'-phosphate.

It catalyses the reaction L-histidinol phosphate + 2-oxoglutarate = 3-(imidazol-4-yl)-2-oxopropyl phosphate + L-glutamate. Its pathway is amino-acid biosynthesis; L-histidine biosynthesis; L-histidine from 5-phospho-alpha-D-ribose 1-diphosphate: step 7/9. This Geotalea daltonii (strain DSM 22248 / JCM 15807 / FRC-32) (Geobacter daltonii) protein is Histidinol-phosphate aminotransferase.